The primary structure comprises 248 residues: Cutinase cut1 (248 aa).

The signal sequence occupies residues 1–17 (MRSLSLFTALLAGQAFA). A disulfide bridge connects residues cysteine 79 and cysteine 153. Serine 164 serves as the catalytic Nucleophile. Residues cysteine 212 and cysteine 219 are joined by a disulfide bond. Aspartate 216 is an active-site residue. Catalysis depends on histidine 229, which acts as the Proton donor/acceptor.

The protein belongs to the cutinase family. The 2 disulfide bonds play a critical role in holding the catalytic residues in juxta-position; reduction of the disulfide bridges results in the complete inactivation of the enzyme.

Its subcellular location is the secreted. It carries out the reaction cutin + H2O = cutin monomers.. In terms of biological role, catalyzes the hydrolysis of complex carboxylic polyesters found in the cell wall of plants. May degrade cutin, a macromolecule that forms the structure of the plant cuticle. May also degrade suberin, a specialized macromolecule found in the cell wall of various plant tissues. This chain is Cutinase cut1, found in Trichoderma harzianum (Hypocrea lixii).